Here is a 537-residue protein sequence, read N- to C-terminus: Exoglucanase 1 (537 aa).

An N-terminal signal peptide occupies residues 1 to 18 (MKGSISYQIYKGALLLSA). The segment at 19 to 453 (LLNSVSAQQV…YVIYSNIKTG (435 aa)) is catalytic. Asparagine 136 carries an N-linked (GlcNAc...) asparagine glycan. Glutamate 235 functions as the Nucleophile in the catalytic mechanism. Residue glutamate 240 is the Proton donor of the active site. Residues asparagine 414 and asparagine 456 are each glycosylated (N-linked (GlcNAc...) asparagine). The linker stretch occupies residues 454–477 (PLNSTFTGGTTSSSSTTTTTSKST). A compositionally biased stretch (low complexity) spans 458 to 502 (TFTGGTTSSSSTTTTTSKSTSTSSSSKTTTTVTTTTTSSGSSGTG). Positions 458-503 (TFTGGTTSSSSTTTTTSKSTSTSSSSKTTTTVTTTTTSSGSSGTGA) are disordered. A CBM1 domain is found at 501-537 (TGARDWAQCGGNGWTGPTTCVSPYTCTKQNDWYSQCL). 2 disulfides stabilise this stretch: cysteine 509-cysteine 526 and cysteine 520-cysteine 536.

This sequence belongs to the glycosyl hydrolase 7 (cellulase C) family.

The protein localises to the secreted. It carries out the reaction Hydrolysis of (1-&gt;4)-beta-D-glucosidic linkages in cellulose and cellotetraose, releasing cellobiose from the non-reducing ends of the chains.. This is Exoglucanase 1 (cbh1) from Penicillium janthinellum (Penicillium vitale).